A 415-amino-acid chain; its full sequence is Diaminopimelate decarboxylase (415 aa).

Lys60 bears the N6-(pyridoxal phosphate)lysine mark. Pyridoxal 5'-phosphate-binding positions include Gly239 and 274-277 (EPGR). Positions 277, 313, and 317 each coordinate substrate. Residue Cys344 is the Proton donor of the active site. The substrate site is built by Glu345 and Tyr372. Tyr372 serves as a coordination point for pyridoxal 5'-phosphate.

Belongs to the Orn/Lys/Arg decarboxylase class-II family. LysA subfamily. Homodimer. Requires pyridoxal 5'-phosphate as cofactor.

The enzyme catalyses meso-2,6-diaminopimelate + H(+) = L-lysine + CO2. It participates in amino-acid biosynthesis; L-lysine biosynthesis via DAP pathway; L-lysine from DL-2,6-diaminopimelate: step 1/1. Its function is as follows. Specifically catalyzes the decarboxylation of meso-diaminopimelate (meso-DAP) to L-lysine. The sequence is that of Diaminopimelate decarboxylase from Haemophilus influenzae (strain ATCC 51907 / DSM 11121 / KW20 / Rd).